We begin with the raw amino-acid sequence, 519 residues long: SMR domain-containing protein At5g58720 (519 aa).

Residues 1 to 15 (MKQKNQHKKKKKRSC) show a composition bias toward basic residues. Disordered stretches follow at residues 1 to 47 (MKQK…REIE) and 92 to 128 (ESGD…CSED). Basic and acidic residues predominate over residues 28–47 (GNKKDVEEERKDGEGKREIE). A compositionally biased stretch (low complexity) spans 98–127 (STSSVASGSSGQETASTSEYGAGSSSSCSE). Positions 428–502 (IDLHGQHVKP…NRGTLLIKLD (75 aa)) constitute a Smr domain.

Interacts with PRL1.

The chain is SMR domain-containing protein At5g58720 from Arabidopsis thaliana (Mouse-ear cress).